The primary structure comprises 608 residues: Protein SHQ1 homolog (608 aa).

Disordered stretches follow at residues Asp487–Ser531 and Ile543–Thr608. A compositionally biased stretch (low complexity) spans Gly489–Gln498. 2 stretches are compositionally biased toward acidic residues: residues Asp502–Val524 and Ile543–Ser579. Residues Glu588–Thr608 are compositionally biased toward polar residues.

Belongs to the SHQ1 family.

Required for the quantitative accumulation of H/ACA ribonucleoproteins (RNPs). The sequence is that of Protein SHQ1 homolog from Drosophila melanogaster (Fruit fly).